The primary structure comprises 512 residues: Cytochrome P450 4d1 (512 aa).

Glu316 and Cys456 together coordinate heme.

The protein belongs to the cytochrome P450 family. Heme serves as cofactor.

The protein localises to the endoplasmic reticulum membrane. It is found in the microsome membrane. Functionally, involved in the metabolism of insect hormones and in the breakdown of synthetic insecticides. This is Cytochrome P450 4d1 (Cyp4d1) from Drosophila simulans (Fruit fly).